The following is a 233-amino-acid chain: Defense protein 3 (233 aa).

The signal sequence occupies residues 1-17 (MFGKFVLLAVLLVGVNS). A propeptide spanning residues 18–45 (RYVIIEDPVYYIEDHELPEQWTSSRVRR) is cleaved from the precursor.

Belongs to the attacin/sarcotoxin-2 family.

It localises to the secreted. Has antibacterial activity against both Gram-positive and Gram-negative bacteria. The polypeptide is Defense protein 3 (Lonomia obliqua (Moth)).